A 65-amino-acid chain; its full sequence is Alpha-insect toxin BotIT1 (65 aa).

Residues 2–64 (RDAYIAQNYN…VPIRIPGKCH (63 aa)) form the LCN-type CS-alpha/beta domain. 4 cysteine pairs are disulfide-bonded: C12-C63, C16-C36, C22-C46, and C26-C48.

Belongs to the long (4 C-C) scorpion toxin superfamily. Sodium channel inhibitor family. Alpha subfamily. As to expression, expressed by the venom gland.

It is found in the secreted. Alpha toxins bind voltage-independently at site-3 of sodium channels (Nav) and inhibit the inactivation of the activated channels, thereby blocking neuronal transmission. This contractive toxin is highly toxic to insects and barely toxic to mammals. The protein is Alpha-insect toxin BotIT1 of Buthus occitanus tunetanus (Common European scorpion).